A 277-amino-acid polypeptide reads, in one-letter code: MQQYHDALRTILECGEESTDRTGTGTISYFGMQMRYPLSDGFPLVTTKKLHLRSIFHELLWFLSGDTNIRYLQDNGVSIWDEWADENGDLGPVYGHQWRAFSALSPTEEVKDGEPLYLGRGVDQVTNLIDMIKSSPDSRRMIVSAWNPADVPRMALPPCHALWQVRVLNGRMHLQLYQRSADMFLGVPFNIASYSLLLVMLAHVTGYEPGDFVHTLGDAHIYSNHMDQVNLQLTRTPKPLPTLRINRQVSSIFDFRYEDFEVIGYDPDPAIRAPVAV.

Arg-21 is a dUMP binding site. (6R)-5,10-methylene-5,6,7,8-tetrahydrofolate is bound at residue His-51. 139–140 contacts dUMP; that stretch reads RR. The active-site Nucleophile is the Cys-159. DUMP is bound by residues 179–182, Asn-190, and 220–222; these read RSAD and HIY. Asp-182 contacts (6R)-5,10-methylene-5,6,7,8-tetrahydrofolate. Residue Ala-276 coordinates (6R)-5,10-methylene-5,6,7,8-tetrahydrofolate.

Belongs to the thymidylate synthase family. Bacterial-type ThyA subfamily. Homodimer.

Its subcellular location is the cytoplasm. It carries out the reaction dUMP + (6R)-5,10-methylene-5,6,7,8-tetrahydrofolate = 7,8-dihydrofolate + dTMP. It participates in pyrimidine metabolism; dTTP biosynthesis. Its function is as follows. Catalyzes the reductive methylation of 2'-deoxyuridine-5'-monophosphate (dUMP) to 2'-deoxythymidine-5'-monophosphate (dTMP) while utilizing 5,10-methylenetetrahydrofolate (mTHF) as the methyl donor and reductant in the reaction, yielding dihydrofolate (DHF) as a by-product. This enzymatic reaction provides an intracellular de novo source of dTMP, an essential precursor for DNA biosynthesis. This Roseobacter denitrificans (strain ATCC 33942 / OCh 114) (Erythrobacter sp. (strain OCh 114)) protein is Thymidylate synthase.